The primary structure comprises 183 residues: DNA-directed RNA polymerase subunit Rpo7 (183 aa).

Residues 82-164 form the S1 motif domain; the sequence is HEVIEGEVSQ…RLPRIALTMK (83 aa).

This sequence belongs to the eukaryotic RPB7/RPC8 RNA polymerase subunit family. In terms of assembly, part of the 13-subunit RNA polymerase complex. Forms a stalk with Rpo4 that extends from the main structure.

It is found in the cytoplasm. The enzyme catalyses RNA(n) + a ribonucleoside 5'-triphosphate = RNA(n+1) + diphosphate. In terms of biological role, DNA-dependent RNA polymerase (RNAP) catalyzes the transcription of DNA into RNA using the four ribonucleoside triphosphates as substrates. Reconstitution experiments show this subunit is required for basic activity. The polypeptide is DNA-directed RNA polymerase subunit Rpo7 (Sulfolobus acidocaldarius (strain ATCC 33909 / DSM 639 / JCM 8929 / NBRC 15157 / NCIMB 11770)).